A 212-amino-acid chain; its full sequence is Ribonuclease HII (212 aa).

Residues 1–205 (MTICGVDEAG…VQDILDRASQ (205 aa)) enclose the RNase H type-2 domain. 3 residues coordinate a divalent metal cation: D7, E8, and D100.

This sequence belongs to the RNase HII family. Mn(2+) serves as cofactor. The cofactor is Mg(2+).

It localises to the cytoplasm. The enzyme catalyses Endonucleolytic cleavage to 5'-phosphomonoester.. Functionally, endonuclease that specifically degrades the RNA of RNA-DNA hybrids. The sequence is that of Ribonuclease HII from Methanocorpusculum labreanum (strain ATCC 43576 / DSM 4855 / Z).